A 369-amino-acid polypeptide reads, in one-letter code: Methionine aminopeptidase 1B, chloroplastic (369 aa).

The N-terminal 61 residues, Met1 to Ala61, are a transit peptide targeting the chloroplast. His199 contacts substrate. Positions 216, 227, and 290 each coordinate a divalent metal cation. Substrate is bound at residue His297. The a divalent metal cation site is built by Glu322 and Glu353.

This sequence belongs to the peptidase M24A family. Methionine aminopeptidase type 1 subfamily. Co(2+) is required as a cofactor. Zn(2+) serves as cofactor. Requires Mn(2+) as cofactor. The cofactor is Fe(2+). In terms of tissue distribution, ubiquitous. Preferentially expressed in green tissues.

It localises to the plastid. The protein localises to the chloroplast. It carries out the reaction Release of N-terminal amino acids, preferentially methionine, from peptides and arylamides.. In terms of biological role, removes the N-terminal methionine from nascent proteins. The N-terminal methionine is often cleaved when the second residue in the primary sequence is small and uncharged (Met-Ala-, Cys, Gly, Pro, Ser, Thr, or Val). The polypeptide is Methionine aminopeptidase 1B, chloroplastic (MAP1B) (Arabidopsis thaliana (Mouse-ear cress)).